Consider the following 213-residue polypeptide: FMN-dependent NADH:quinone oxidoreductase 1 (213 aa).

18-20 (SVS) contributes to the FMN binding site.

It belongs to the azoreductase type 1 family. In terms of assembly, homodimer. The cofactor is FMN.

It catalyses the reaction 2 a quinone + NADH + H(+) = 2 a 1,4-benzosemiquinone + NAD(+). It carries out the reaction N,N-dimethyl-1,4-phenylenediamine + anthranilate + 2 NAD(+) = 2-(4-dimethylaminophenyl)diazenylbenzoate + 2 NADH + 2 H(+). Its function is as follows. Quinone reductase that provides resistance to thiol-specific stress caused by electrophilic quinones. Functionally, also exhibits azoreductase activity. Catalyzes the reductive cleavage of the azo bond in aromatic azo compounds to the corresponding amines. This chain is FMN-dependent NADH:quinone oxidoreductase 1, found in Bacillus cereus (strain ATCC 10987 / NRS 248).